The primary structure comprises 139 residues: Nucleoside diphosphate kinase (139 aa).

ATP contacts are provided by K12, F60, R88, T94, R105, and N115. Residue H118 is the Pros-phosphohistidine intermediate of the active site.

It belongs to the NDK family. As to quaternary structure, homotetramer. The cofactor is Mg(2+).

The protein localises to the cytoplasm. It carries out the reaction a 2'-deoxyribonucleoside 5'-diphosphate + ATP = a 2'-deoxyribonucleoside 5'-triphosphate + ADP. It catalyses the reaction a ribonucleoside 5'-diphosphate + ATP = a ribonucleoside 5'-triphosphate + ADP. Major role in the synthesis of nucleoside triphosphates other than ATP. The ATP gamma phosphate is transferred to the NDP beta phosphate via a ping-pong mechanism, using a phosphorylated active-site intermediate. This is Nucleoside diphosphate kinase from Caldanaerobacter subterraneus subsp. tengcongensis (strain DSM 15242 / JCM 11007 / NBRC 100824 / MB4) (Thermoanaerobacter tengcongensis).